A 302-amino-acid polypeptide reads, in one-letter code: Recombination-associated protein RdgC (302 aa).

It belongs to the RdgC family.

The protein localises to the cytoplasm. Its subcellular location is the nucleoid. May be involved in recombination. This chain is Recombination-associated protein RdgC, found in Proteus mirabilis (strain HI4320).